The following is a 1292-amino-acid chain: SH3 and multiple ankyrin repeat domains protein 2 (1292 aa).

The region spanning 56–150 is the PDZ domain; the sequence is TVVLQKKDNE…HLVLKVVTVT (95 aa). Disordered regions lie at residues 155 to 176, 331 to 393, 488 to 508, 604 to 656, 671 to 743, 774 to 811, and 938 to 968; these read PDDT…TALS, MPDA…SDNV, IKEP…METD, SSNA…KLLD, ALKE…EKKN, LTES…SECG, and IEEV…TLSS. Over residues 338–354 the composition is skewed to pro residues; the sequence is IPPPPATLPPSPPPPSP. Residues 355–365 show a composition bias toward low complexity; that stretch reads SSFNSPKSPAP. Positions 375–384 are enriched in polar residues; that stretch reads FTQNSGTKSP. Positions 492–504 are enriched in low complexity; sequence STSSSGKSSQGSS. Residues 604-623 are compositionally biased toward polar residues; it reads SSNAFTNNDSSHQGDVSNAR. Residues 719–743 are compositionally biased toward basic and acidic residues; that stretch reads KRQETESKHEPDSSKEEKRQGEKKN. Positions 941–952 are enriched in basic and acidic residues; it reads VDSRSGSDHHLE. Over residues 953–968 the composition is skewed to low complexity; sequence TTSTISTVSSISTLSS. The SH3-binding signature appears at 991 to 997; the sequence is PPVPPKP. Residues 1087–1115 form a disordered region; it reads TKTGEGLDSPTGMKTASLSTRGTDALSTV. A compositionally biased stretch (polar residues) spans 1098–1115; sequence GMKTASLSTRGTDALSTV. Positions 1229-1292 constitute an SAM domain; the sequence is WTKQDVAEWL…ERALKQLLDR (64 aa).

Belongs to the SHANK family.

The protein resides in the cytoplasm. It localises to the synapse. Its subcellular location is the postsynaptic density. Functionally, seems to be an adapter protein in the postsynaptic density (PSD) of excitatory synapses that interconnects receptors of the postsynaptic membrane including NMDA-type and metabotropic glutamate receptors, and the actin-based cytoskeleton. May play a role in the structural and functional organization of the dendritic spine and synaptic junction. The polypeptide is SH3 and multiple ankyrin repeat domains protein 2 (shank2) (Xenopus laevis (African clawed frog)).